The chain runs to 553 residues: CDP-diacylglycerol--glycerol-3-phosphate 3-phosphatidyltransferase, mitochondrial (553 aa).

The N-terminal 25 residues, 1 to 25 (MAAPAAGPVFWRRLLGLLPGRPGLA), are a transit peptide targeting the mitochondrion. S46 is subject to Phosphoserine. An ATP-binding site is contributed by 121 to 128 (ASLYLGTG). PLD phosphodiesterase domains are found at residues 212 to 238 (TIGLQHIKVYLFDNNVILSGANLSDSY) and 457 to 490 (RGWTFHAKGLWLYLAGSSLPCLTLIGSPNFGYRS). Residues H217, K219, and D224 contribute to the active site.

This sequence belongs to the CDP-alcohol phosphatidyltransferase class-II family. In terms of tissue distribution, widely expressed with higher expression in testis, liver and brain.

It is found in the mitochondrion. It carries out the reaction a CDP-1,2-diacyl-sn-glycerol + sn-glycerol 3-phosphate = a 1,2-diacyl-sn-glycero-3-phospho-(1'-sn-glycero-3'-phosphate) + CMP + H(+). The protein operates within phospholipid metabolism; phosphatidylglycerol biosynthesis; phosphatidylglycerol from CDP-diacylglycerol: step 1/2. Activated by calcium and magnesium and inhibited by other bivalent cations. Functionally, functions in the biosynthesis of the anionic phospholipids phosphatidylglycerol and cardiolipin. The chain is CDP-diacylglycerol--glycerol-3-phosphate 3-phosphatidyltransferase, mitochondrial (Pgs1) from Mus musculus (Mouse).